Here is a 290-residue protein sequence, read N- to C-terminus: Putative heme oxygenase 3 (290 aa).

Residues 1–12 (MSSEVETAEAVD) are compositionally biased toward acidic residues. Residues 1–33 (MSSEVETAEAVDESEKNSMASEKENHSKIADFS) form a disordered region. Over residues 13-33 (ESEKNSMASEKENHSKIADFS) the composition is skewed to basic and acidic residues. 2 HRM repeats span residues 238–243 (KCPFNA) and 255–260 (NCPFQM).

It belongs to the heme oxygenase family. In terms of tissue distribution, found in the spleen, liver, thymus, prostate, heart, kidney, brain and testis.

The catalysed reaction is heme b + 3 reduced [NADPH--hemoprotein reductase] + 3 O2 = biliverdin IXalpha + CO + Fe(2+) + 3 oxidized [NADPH--hemoprotein reductase] + 3 H2O + H(+). In terms of biological role, heme oxygenase cleaves the heme ring at the alpha methene bridge to form biliverdin. Biliverdin is subsequently converted to bilirubin by biliverdin reductase. Heme oxygenase 3 could be implicated in some heme-dependent regulatory role in the cell. This is Putative heme oxygenase 3 (Hmox3) from Rattus norvegicus (Rat).